A 262-amino-acid chain; its full sequence is 2-keto-4-pentenoate hydratase (262 aa).

It belongs to the hydratase/decarboxylase family. MhpD subfamily. A divalent metal cation is required as a cofactor.

It carries out the reaction (S)-4-hydroxy-2-oxopentanoate = (2Z)-2-hydroxypenta-2,4-dienoate + H2O. It participates in aromatic compound metabolism; 3-phenylpropanoate degradation. Functionally, catalyzes the conversion of 2-hydroxypentadienoic acid (enolic form of 2-oxopent-4-enoate) to 4-hydroxy-2-ketopentanoic acid. In Paraburkholderia phymatum (strain DSM 17167 / CIP 108236 / LMG 21445 / STM815) (Burkholderia phymatum), this protein is 2-keto-4-pentenoate hydratase.